A 73-amino-acid polypeptide reads, in one-letter code: uncharacterized protein (73 aa).

A helical membrane pass occupies residues Ala37–Ala57.

It is found in the membrane. This is an uncharacterized protein from Natronomonas pharaonis (strain ATCC 35678 / DSM 2160 / CIP 103997 / JCM 8858 / NBRC 14720 / NCIMB 2260 / Gabara) (Halobacterium pharaonis).